Consider the following 474-residue polypeptide: tRNA-2-methylthio-N(6)-dimethylallyladenosine synthase (474 aa).

In terms of domain architecture, MTTase N-terminal spans 3–120 (KKLHIKTWGC…LPEMINHVQG (118 aa)). The [4Fe-4S] cluster site is built by Cys12, Cys49, Cys83, Cys157, Cys161, and Cys164. A Radical SAM core domain is found at 143–375 (RAEGPTAFVS…QQRISQQAME (233 aa)). One can recognise a TRAM domain in the interval 378–441 (RKMVGTVQRV…ASSLRGILLR (64 aa)).

This sequence belongs to the methylthiotransferase family. MiaB subfamily. Monomer. It depends on [4Fe-4S] cluster as a cofactor.

The protein localises to the cytoplasm. The catalysed reaction is N(6)-dimethylallyladenosine(37) in tRNA + (sulfur carrier)-SH + AH2 + 2 S-adenosyl-L-methionine = 2-methylsulfanyl-N(6)-dimethylallyladenosine(37) in tRNA + (sulfur carrier)-H + 5'-deoxyadenosine + L-methionine + A + S-adenosyl-L-homocysteine + 2 H(+). Its function is as follows. Catalyzes the methylthiolation of N6-(dimethylallyl)adenosine (i(6)A), leading to the formation of 2-methylthio-N6-(dimethylallyl)adenosine (ms(2)i(6)A) at position 37 in tRNAs that read codons beginning with uridine. This chain is tRNA-2-methylthio-N(6)-dimethylallyladenosine synthase, found in Yersinia pestis bv. Antiqua (strain Angola).